The sequence spans 195 residues: Thymidine kinase (195 aa).

Residues 15–22 (GSMFSGKS) and 88–91 (DEVQ) each bind ATP. Residue E89 is the Proton acceptor of the active site. Positions 145, 148, 183, and 186 each coordinate Zn(2+).

This sequence belongs to the thymidine kinase family. In terms of assembly, homotetramer.

The protein localises to the cytoplasm. The catalysed reaction is thymidine + ATP = dTMP + ADP + H(+). This is Thymidine kinase from Bacillus cereus (strain ZK / E33L).